The sequence spans 207 residues: Transcription factor bHLH149 (207 aa).

Residues 1 to 25 are disordered; sequence MVESLFPSIENTGESSRRKKPRISE. Residues 132–181 enclose the bHLH domain; that stretch reads KSRKGLTETNRIKLPAVERKLKILGRLVPGCRKVSVPNLLDEATDYIAAL.

In terms of assembly, homodimer. Interacts with PRE3.

It is found in the nucleus. Atypical bHLH transcription factor probably unable to bind DNA. Negatively regulates brassinosteroid signaling. The chain is Transcription factor bHLH149 (BHLH149) from Arabidopsis thaliana (Mouse-ear cress).